The sequence spans 446 residues: Baeyer-Villiger monooxygenase dmxR6 (446 aa).

Belongs to the AflY oxidoreductase family.

Its pathway is secondary metabolite biosynthesis. Baeyer-Villiger monooxygenase; part of the gene cluster that mediates the biosynthesis of the dimeric xanthones cryptosporioptides. The pathway begins with the synthesis of atrochrysone thioester by the polyketide synthase dmx-nrPKS. The atrochrysone carboxyl ACP thioesterase dmxR1 then breaks the thioester bond and releases the atrochrysone carboxylic acid from dmx-nrPKS. Atrochrysone carboxylic acid is decarboxylated by the decarboxylase dmxR15, and oxidized by the anthrone oxygenase dmxR16 to yield emodin. Emodin is then reduced to emodin hydroquinone by the oxidoreductase dmxR7. A-ring reduction by the short chain dehydrogenase dmxR18, dehydration by the scytalone dehydratase-like protein dmxR17 and probable spontaneous re-oxidation, results in overall deoxygenation to chrysophanol. Baeyer-Villiger oxidation by the Baeyer-Villiger monooxygenase (BVMO) dmxR6 then yields monodictylactone in equilibrium with monodictyphenone. In the case of the cryptosporioptides biosynthesis, monodictylactone is reduced at C-12 to an alcohol (by the short chain dehydrogenases dmxR12 or dmxR8) and hydroxylated at C-5 by dmxR9, yielding the electron-rich aromatic which could eliminate H(2)O to form the ortho-quinonemethide, followed by tautomerisation to paraquinone and complete the formal reduction to produce the 10-methylgroup. Conjugate addition of C-4a-OH to the resulting paraquinone by the monooxygenase dmxR10 then gives cyclohexadienone, which is then reduced at C-5 by the short chain dehydrogenase dmxR3 to give the dihydroxanthone. The 6,7-epoxide in the cryptosporioptides could be introduced by the cytochrome P450 monooxygenase dmxL3. The highly reducing PKS dmxL2 manufactures butyrate, which is further carboxylated by dmxL1 to form ethylmalonate. It is not yet clear whether the carboxylation occurs while the butyrate is attached to the ACP of dmxL2, but this unusual fungal metabolite could then be esterified to O-5 by the O-acetyltransferase dmxR13. Finally, dimerization performed by dmxR5 gives the observed dimers cryptosporioptides A, B and C as the final products of the pathway. The polypeptide is Baeyer-Villiger monooxygenase dmxR6 (Cryptosporiopsis sp. (strain 8999)).